The sequence spans 155 residues: uncharacterized protein (155 aa).

5 consecutive transmembrane segments (helical) span residues 4–24 (IVGA…AGYL), 46–66 (AIGI…AIVY), 77–97 (FWFT…FQFT), 101–121 (LLAA…LLII), and 130–150 (SYLL…SFTI).

The protein belongs to the TspO/BZRP family.

It is found in the cell membrane. This is an uncharacterized protein from Bacillus subtilis (strain 168).